A 212-amino-acid polypeptide reads, in one-letter code: Leucine efflux protein (212 aa).

6 helical membrane-spanning segments follow: residues 12 to 32, 49 to 69, 71 to 91, 122 to 142, 153 to 173, and 188 to 208; these read TYLV…LFVL, GVFI…ATLI, TTPI…LYLG, ILSL…VQFI, FFIL…FLII, and LAKV…ARLA.

This sequence belongs to the Rht family.

The protein localises to the cell inner membrane. It catalyses the reaction L-leucine(in) + H(+)(out) = L-leucine(out) + H(+)(in). Its function is as follows. Exporter of leucine. The sequence is that of Leucine efflux protein (leuE) from Escherichia coli O6:K15:H31 (strain 536 / UPEC).